A 324-amino-acid polypeptide reads, in one-letter code: Inhibitor of growth protein 1 homolog (324 aa).

The tract at residues 120-237 (AEEEKKKKKS…SSRKQKSMAA (118 aa)) is disordered. Positions 140–169 (SSTTSSSSSSSSSSLSLSSSTNNTSSLNSS) are enriched in low complexity. Residues 170–186 (SGGGGGGSGGGGGGGGH) show a composition bias toward gly residues. Residues 201–229 (SLTSSSSSGNINGMSSSSSSSSSSSSLSS) show a composition bias toward low complexity. The PHD-type zinc finger occupies 271–320 (PTYCFCNRVSFGEMVGCENPDCKIEWFHFECVGLTSTPKGKWYCPDCTRI). Zn(2+)-binding residues include C274, C276, C287, C292, H298, C301, C314, and C317.

The protein belongs to the ING family. Interacts with H3K4me3 and to a lesser extent with H3K4me2.

It localises to the nucleus. Functionally, involved in regulation of the growth and differentiation transition (GDT) process, probably by regulating gene expression via histone modification. This chain is Inhibitor of growth protein 1 homolog, found in Dictyostelium discoideum (Social amoeba).